Here is a 377-residue protein sequence, read N- to C-terminus: Ribosomal RNA large subunit methyltransferase G (377 aa).

It belongs to the methyltransferase superfamily. RlmG family.

The protein resides in the cytoplasm. It catalyses the reaction guanosine(1835) in 23S rRNA + S-adenosyl-L-methionine = N(2)-methylguanosine(1835) in 23S rRNA + S-adenosyl-L-homocysteine + H(+). Functionally, specifically methylates the guanine in position 1835 (m2G1835) of 23S rRNA. The chain is Ribosomal RNA large subunit methyltransferase G from Shewanella sp. (strain ANA-3).